The primary structure comprises 177 residues: Large ribosomal subunit protein uL6 (177 aa).

The protein belongs to the universal ribosomal protein uL6 family. In terms of assembly, part of the 50S ribosomal subunit.

Functionally, this protein binds to the 23S rRNA, and is important in its secondary structure. It is located near the subunit interface in the base of the L7/L12 stalk, and near the tRNA binding site of the peptidyltransferase center. This chain is Large ribosomal subunit protein uL6, found in Cereibacter sphaeroides (strain ATCC 17029 / ATH 2.4.9) (Rhodobacter sphaeroides).